Here is a 535-residue protein sequence, read N- to C-terminus: Probable inorganic phosphate transporter 1-7 (535 aa).

Over 1-24 (MAGDQLNVLNALDVAKTQWYHFTA) the chain is Cytoplasmic. A helical membrane pass occupies residues 25–45 (IIIAGMGFFTDAYDLFCISLV). The Extracellular segment spans residues 46 to 70 (TKLLGRIYYHVDGSEKPGTLPPNVS). A helical membrane pass occupies residues 71 to 91 (AAVNGVAFCGTLAGQLFFGWL). Residues 92–99 (GDKLGRKK) lie on the Cytoplasmic side of the membrane. The helical transmembrane segment at 100-120 (VYGMTLMVMVLCSIASGLSFG) threads the bilayer. At 121–131 (SNPKTVMTTLC) the chain is on the extracellular side. Residues 132 to 152 (FFRFWLGFGIGGDYPLSATIM) form a helical membrane-spanning segment. The Cytoplasmic portion of the chain corresponds to 153-161 (SEYANKKTR). A helical transmembrane segment spans residues 162 to 182 (GAFIAAVFAMQGFGILTGGIF). Residues 183 to 211 (AIIVSAAFEAKFPAPTYQIDALASTVPQA) lie on the Extracellular side of the membrane. Residues 212 to 232 (DYVWRIILMVGALPAAMTYYS) traverse the membrane as a helical segment. Topologically, residues 233-289 (RSKMPETARYTALVAKDAKLAASNMSKVLQVEIEAEQQGTEDKSNSFGLFSKEFMKR) are cytoplasmic. Residues 290–310 (HGLHLLGTTSTWFLLDIAFYS) form a helical membrane-spanning segment. At 311–345 (QNLFQKDIFSAIGWIPPAQTMNAIQEVFKIARAQT) the chain is on the extracellular side. A helical membrane pass occupies residues 346 to 366 (LIALCSTVPGYWFTVAFIDVI). At 367 to 368 (GR) the chain is on the cytoplasmic side. The chain crosses the membrane as a helical span at residues 369 to 389 (FAIQMMGFFFMTVFMFALAIP). The Extracellular portion of the chain corresponds to 390 to 399 (YDHWTHKENR). Residues 400-420 (IGFVAMYSLTFFFANFGPNAT) form a helical membrane-spanning segment. Topologically, residues 421–438 (TFVVPAEIFPARFRSTCH) are cytoplasmic. Residues 439–459 (GISAASGKLGAMVGAFGFLYL) traverse the membrane as a helical segment. Residues 460 to 480 (AQSPDKTKTEHGYPPGIGVKN) lie on the Extracellular side of the membrane. A helical membrane pass occupies residues 481-501 (SLIVLGVVNLLGMVFTLLVPE). Topologically, residues 502 to 535 (SKGKSLEEMSGENEQNDESSSSSNNNSNNAVSTA) are cytoplasmic. The disordered stretch occupies residues 506–535 (SLEEMSGENEQNDESSSSSNNNSNNAVSTA). Over residues 519 to 535 (ESSSSSNNNSNNAVSTA) the composition is skewed to low complexity. Phosphoserine is present on Ser-520.

Belongs to the major facilitator superfamily. Phosphate:H(+) symporter (TC 2.A.1.9) family. In terms of tissue distribution, mature pollen.

The protein resides in the membrane. In terms of biological role, high-affinity transporter for external inorganic phosphate. The protein is Probable inorganic phosphate transporter 1-7 (PHT1-7) of Arabidopsis thaliana (Mouse-ear cress).